The chain runs to 222 residues: Myosin regulatory light chain 2 (222 aa).

Positions 1–65 (MADEKKKVKK…RGSRKSKRAG (65 aa)) are disordered. Position 2 is an N-acetylalanine (alanine 2). A compositionally biased stretch (low complexity) spans 19 to 53 (TSETASEAASEAATPAPAATPAPAASATGSKRASG). Serine 66 and serine 67 each carry phosphoserine. 3 consecutive EF-hand domains span residues 75–110 (KQIA…VGKI), 147–180 (DEDE…FGDK), and 181–216 (FTMK…KGEE). Positions 88, 90, 92, and 99 each coordinate Ca(2+).

As to quaternary structure, myosin is a hexamer of 2 heavy chains and 4 light chains.

This chain is Myosin regulatory light chain 2 (Mlc2), found in Drosophila melanogaster (Fruit fly).